The chain runs to 410 residues: Serine hydroxymethyltransferase (410 aa).

(6S)-5,6,7,8-tetrahydrofolate contacts are provided by residues leucine 116 and 120–122 (GHL). At lysine 225 the chain carries N6-(pyridoxal phosphate)lysine. 349-351 (SPF) serves as a coordination point for (6S)-5,6,7,8-tetrahydrofolate.

The protein belongs to the SHMT family. In terms of assembly, homodimer. Pyridoxal 5'-phosphate serves as cofactor.

It localises to the cytoplasm. The catalysed reaction is (6R)-5,10-methylene-5,6,7,8-tetrahydrofolate + glycine + H2O = (6S)-5,6,7,8-tetrahydrofolate + L-serine. Its pathway is one-carbon metabolism; tetrahydrofolate interconversion. It functions in the pathway amino-acid biosynthesis; glycine biosynthesis; glycine from L-serine: step 1/1. Catalyzes the reversible interconversion of serine and glycine with tetrahydrofolate (THF) serving as the one-carbon carrier. This reaction serves as the major source of one-carbon groups required for the biosynthesis of purines, thymidylate, methionine, and other important biomolecules. Also exhibits THF-independent aldolase activity toward beta-hydroxyamino acids, producing glycine and aldehydes, via a retro-aldol mechanism. This chain is Serine hydroxymethyltransferase, found in Leuconostoc mesenteroides subsp. mesenteroides (strain ATCC 8293 / DSM 20343 / BCRC 11652 / CCM 1803 / JCM 6124 / NCDO 523 / NBRC 100496 / NCIMB 8023 / NCTC 12954 / NRRL B-1118 / 37Y).